The following is a 414-amino-acid chain: NADH-dependent flavin oxidoreductase iccE (414 aa).

Residues 25–28 and Gln107 each bind FMN; that span reads TAIA. 188–191 provides a ligand contact to substrate; the sequence is HASH. 347 to 348 provides a ligand contact to FMN; that stretch reads AR.

The protein belongs to the NADH:flavin oxidoreductase/NADH oxidase family.

It carries out the reaction 8-epi-ilicicolin H = ilicicolin H. It participates in mycotoxin biosynthesis. Its function is as follows. NADH-dependent flavin oxidoreductase; part of the gene cluster that mediates the biosynthesis of ilicicolin H, a 4-hydroxy-2-pyridonealkaloid that has potent and broad antifungal activities by inhibiting the mitochondrial respiration chain. IccE acts as an epimerase and catalyzes the conversion of 8-epi-ilicicolin H into the final product ilicicolin H. The biosynthesis of ilicicolin H starts with formation of the tetramic acid by the hybrid PKS-NRPS synthetase iccA with the partnering trans-enoyl reductase iccB since iccA lacks a designated enoylreductase (ER) domain. The cytochrome P450 monooxygenase iccC then catalyzes the ring expansion of the tetramate to the acyclic 2-pyridone. The pericyclase iccD further converts the acyclic 2-pyridone into 8-epi-ilicicolin H. Finally, the epimerase iccE converts 8-epi-ilicicolin H into ilicicolin H via epimerization. IccA to iccE are sufficient for ilicicolin H biosynthesis and the roles of the remaining enzymes, iccF, iccG and iccH within the pathway have still to be determined. The polypeptide is NADH-dependent flavin oxidoreductase iccE (Talaromyces variabilis (Penicillium variabile)).